We begin with the raw amino-acid sequence, 422 residues long: Histidine--tRNA ligase (422 aa).

It belongs to the class-II aminoacyl-tRNA synthetase family. In terms of assembly, homodimer.

The protein localises to the cytoplasm. It catalyses the reaction tRNA(His) + L-histidine + ATP = L-histidyl-tRNA(His) + AMP + diphosphate + H(+). This is Histidine--tRNA ligase from Vibrio parahaemolyticus serotype O3:K6 (strain RIMD 2210633).